The primary structure comprises 401 residues: Phosphoglycerate kinase (401 aa).

Residues 26–28, Arg41, 64–67, Arg123, and Arg156 contribute to the substrate site; these read DLN and HLGR. Residues Lys207, Gly298, Glu329, and 355–358 each bind ATP; that span reads GGDS.

It belongs to the phosphoglycerate kinase family. In terms of assembly, monomer.

It is found in the cytoplasm. The enzyme catalyses (2R)-3-phosphoglycerate + ATP = (2R)-3-phospho-glyceroyl phosphate + ADP. Its pathway is carbohydrate degradation; glycolysis; pyruvate from D-glyceraldehyde 3-phosphate: step 2/5. The protein is Phosphoglycerate kinase of Bdellovibrio bacteriovorus (strain ATCC 15356 / DSM 50701 / NCIMB 9529 / HD100).